Consider the following 620-residue polypeptide: MAU2 chromatid cohesion factor homolog (620 aa).

TPR repeat units lie at residues 452 to 485 and 492 to 525; these read GGFY…ANAE and SCSL…ASKI.

This sequence belongs to the SCC4/mau-2 family. As to quaternary structure, interacts with Nipped-B to form the cohesin loading complex.

It localises to the nucleus. The protein localises to the nucleoplasm. In terms of biological role, required for association of the cohesin complex with chromatin during interphase. Plays a role in sister chromatid cohesion and normal progression through prometaphase. In Drosophila persimilis (Fruit fly), this protein is MAU2 chromatid cohesion factor homolog.